We begin with the raw amino-acid sequence, 536 residues long: Pre-mRNA 3'-end-processing factor FIP1 (536 aa).

Composition is skewed to basic and acidic residues over residues 1 to 10 (MSAGEVERLV) and 32 to 42 (VHVHSDLAKDL). Disordered regions lie at residues 1–95 (MSAG…EDDV), 212–246 (VQQG…GLPP), and 300–536 (FPPG…APAE). A sufficient for interaction with PAPOLA region spans residues 1–110 (MSAGEVERLV…DIKTGAPQYG (110 aa)). Positions 1-296 (MSAGEVERLV…TEVDNNFSKP (296 aa)) are necessary for stimulating PAPOLA activity. Composition is skewed to acidic residues over residues 43-54 (DENEVERPEEEN) and 80-94 (TEDD…DEDD). Phosphoserine is present on residues serine 84, serine 86, and serine 88. The sufficient for interaction with CPSF4 stretch occupies residues 136-219 (KGVDLDAPGS…ITVQQGRTGN (84 aa)). A compositionally biased stretch (pro residues) spans 300–344 (FPPGAPPTHLPPPPFLPPPPTVSTAPPLIPPPGFPPPPGAPPPSL). Position 366 is a phosphotyrosine (tyrosine 366). A compositionally biased stretch (polar residues) spans 374–390 (LTSSAPSWPSLVDTTKQ). Positions 383-536 (SLVDTTKQWD…QESTEAAPAE (154 aa)) are sufficient for interaction with CPSF1 and CSTF3. Over residues 394 to 434 (YARREKDRDRDRERDRDRERERDRDRERERTRERERERDHS) the composition is skewed to basic and acidic residues. The arg/Asp/Glu-rich domain stretch occupies residues 397 to 432 (REKDRDRDRERDRDRERERDRDRERERTRERERERD). The residue at position 434 (serine 434) is a Phosphoserine. Position 436 is a phosphothreonine (threonine 436). Residues serine 438 and serine 442 each carry the phosphoserine modification. The span at 443–470 (DEERYRYREYAERGYERHRASREKEERH) shows a compositional bias: basic and acidic residues. Over residues 484-493 (KSSRSNSRRR) the composition is skewed to basic residues. Serine 496 carries the post-translational modification Phosphoserine. The span at 502 to 512 (HRRHKHKKSKR) shows a compositional bias: basic residues.

It belongs to the FIP1 family. As to quaternary structure, component of the cleavage and polyadenylation specificity factor (CPSF) complex, composed of CPSF1, CPSF2, CPSF3, CPSF4 and FIP1L1. Found in a complex with CPSF1, FIP1L1 and PAPOLA. Interacts with CPSF1, CPSF4, CSTF2 and CSTF3. Interacts with AHCYL1 (when phosphorylated); the interaction is direct and associates AHCYL1 with the CPSF complex and RNA. Interacts with PAPOLA; the interaction seems to be increased by the interaction with AHCYL1. Interacts with NUDT21/CPSF5; this interaction occurs in a RNA sequence-specific manner. Interacts (preferentially via unphosphorylated form and Arg/Glu/Asp-rich domain) with CPSF6 (via Arg/Ser-rich domain); this interaction mediates, at least in part, the interaction between the CFIm and CPSF complexes and may be inhibited by CPSF6 hyper-phosphorylation. Interacts (preferentially via unphosphorylated form and Arg/Asp/Glu-rich domain) with CPSF7 (via Arg/Ser-rich domain); this interaction mediates, at least in part, the interaction between the CFIm and CPSF complexes and may be inhibited by CPSF7 hyper-phosphorylation.

Its subcellular location is the nucleus. In terms of biological role, component of the cleavage and polyadenylation specificity factor (CPSF) complex that plays a key role in pre-mRNA 3'-end formation, recognizing the AAUAAA signal sequence and interacting with poly(A) polymerase and other factors to bring about cleavage and poly(A) addition. FIP1L1 contributes to poly(A) site recognition and stimulates poly(A) addition. Binds to U-rich RNA sequence elements surrounding the poly(A) site. May act to tether poly(A) polymerase to the CPSF complex. The chain is Pre-mRNA 3'-end-processing factor FIP1 (Fip1l1) from Rattus norvegicus (Rat).